A 488-amino-acid polypeptide reads, in one-letter code: MKLKEIALFNELAPGEAGEVEITGITSDSRAVQRGFLFAALKGVKADGAVFAADAAKRGAVAIIAGKDTAIADAGVPVLHVDDPRHVLAIAAAQFYGKQPEVMVAVTGTSGKTSVASFTRQIWAYAGFPAANIGTTGVFSPTRSDYNSLTTPDPVELHRVLAELASEGVTHAAMEASSHGLDQRRLDGVRLAAGAFTNLGRDHMDYHATIDEYLGAKMRLFNALLPKGAPAIIFADDQFSAQAIEAATLAGCDVKTVGRKGNFIALKRVEHERFRQHVEVRIGEEIFEIELPLAGDFQVANALVAAGLAMVTGVPAAAAMRALALLKGAPGRLDLVGATEDGAPAYVDYAHKPEALENVLTSVRPFTTGRVIVVFGCGGDRDKGKRPIMGEIASRLADVVIVTDDNPRSEVPAQIRSEIMAAATGATEIGDRREAIFTAVSMMQPGDTLVVAGKGHEEGQIVGNITLPFSDHAEVAAALAARLEEHLK.

S29 contributes to the UDP-N-acetyl-alpha-D-muramoyl-L-alanyl-D-glutamate binding site. 108–114 (GTSGKTS) contributes to the ATP binding site. Residues 150–151 (TT), S177, Q183, and R185 contribute to the UDP-N-acetyl-alpha-D-muramoyl-L-alanyl-D-glutamate site. K217 is modified (N6-carboxylysine). Meso-2,6-diaminopimelate-binding positions include R381, 405–408 (DNPR), G453, and E457. The short motif at 405–408 (DNPR) is the Meso-diaminopimelate recognition motif element.

Belongs to the MurCDEF family. MurE subfamily. It depends on Mg(2+) as a cofactor. Post-translationally, carboxylation is probably crucial for Mg(2+) binding and, consequently, for the gamma-phosphate positioning of ATP.

Its subcellular location is the cytoplasm. The enzyme catalyses UDP-N-acetyl-alpha-D-muramoyl-L-alanyl-D-glutamate + meso-2,6-diaminopimelate + ATP = UDP-N-acetyl-alpha-D-muramoyl-L-alanyl-gamma-D-glutamyl-meso-2,6-diaminopimelate + ADP + phosphate + H(+). The protein operates within cell wall biogenesis; peptidoglycan biosynthesis. Functionally, catalyzes the addition of meso-diaminopimelic acid to the nucleotide precursor UDP-N-acetylmuramoyl-L-alanyl-D-glutamate (UMAG) in the biosynthesis of bacterial cell-wall peptidoglycan. The protein is UDP-N-acetylmuramoyl-L-alanyl-D-glutamate--2,6-diaminopimelate ligase of Brucella melitensis biotype 1 (strain ATCC 23456 / CCUG 17765 / NCTC 10094 / 16M).